The following is a 190-amino-acid chain: Pyridoxamine 5'-phosphate oxidase C1952.08c homolog (190 aa).

Positions 62 and 69 each coordinate FMN.

It belongs to the pyridoxamine 5'-phosphate oxidase family. It depends on FMN as a cofactor.

It localises to the cytoplasm. It is found in the nucleus. The polypeptide is Pyridoxamine 5'-phosphate oxidase C1952.08c homolog (Schizosaccharomyces pombe (strain 972 / ATCC 24843) (Fission yeast)).